The chain runs to 410 residues: MNNRYPVMKKGLIVLVVIAVAAGGYYWWKHPAQPSSDGDLSGQSAHGKRGNGAHKPLAPVQAASAVTESVPQYLNGLGTVTAANTVTVRSRVDGNLMSIHFTEGQQVKAGQLLAEIDPRPYQVALMQAQGQLARDQATLANARRDLARYQKLAKTSLVSQQDLDTQNALVSETLGTIKADEGSVASAQLNLTYSRITSPIDGRVGLKQVDIGNYITSGDTNGLVVITQTHPVDVVFSVAENNISQIMQAQKSGEPLLVEAWDRSNQHLITRGKLLSLDNQIDATTGTIKIKARFDNQDDLLFPNQFVNARLKVNTLQDAVVIPAAALQMGNEGHFVWVINNEDKVSKKSVTAGLQDSQKVVISAGLNAGDRVVTDGLDRLTEGAKVEVVAAQSRATKETRASLPSKGESE.

Positions 1 to 21 are cleaved as a signal peptide; it reads MNNRYPVMKKGLIVLVVIAVA. Positions 36–56 are disordered; the sequence is SDGDLSGQSAHGKRGNGAHKP.

The protein belongs to the membrane fusion protein (MFP) (TC 8.A.1) family. As to quaternary structure, part of a tripartite efflux system composed of MdtA, MdtB and MdtC.

The protein resides in the cell inner membrane. The protein is Multidrug resistance protein MdtA of Pantoea ananatis (strain AJ13355).